Here is a 478-residue protein sequence, read N- to C-terminus: Calcium/calmodulin-dependent protein kinase type II subunit alpha (478 aa).

Tyr13 is subject to Phosphotyrosine. A Protein kinase domain is found at 13 to 271 (YQLFEELGKG…AAEALKHPWI (259 aa)). ATP contacts are provided by residues 19-27 (LGKGAFSVV) and Lys42. Asp135 acts as the Proton acceptor in catalysis. A Phosphoserine modification is found at Ser257. Thr286 is subject to Phosphothreonine; by autocatalysis. Residues 290–300 (LKKFNARRKLK) are calmodulin-binding. The interaction with BAALC stretch occupies residues 310–320 (TRNFSGGKSGG). The tract at residues 314-341 (SGGKSGGNKKNDGVKESSESTNTTIEDE) is disordered. The span at 322–331 (KKNDGVKESS) shows a compositional bias: basic and acidic residues. Ser330, Ser331, and Ser333 each carry phosphoserine. Phosphothreonine is present on residues Thr336 and Thr337. Ser404 carries the phosphoserine modification.

The protein belongs to the protein kinase superfamily. CAMK Ser/Thr protein kinase family. CaMK subfamily. There are 4 genes encoding calcium/calmodulin-dependent protein kinase type II chains: CAMK2A, CAMK2B, CAMK2G and CAMK2D. The corresponding proteins assemble into homo- or heteromultimeric holoenzymes composed of 12 subunits with two hexameric rings stacked one on top of the other. Interacts with BAALC. Interacts with MPDZ. Interacts with SYN1. Interacts with CAMK2N2. Interacts with SYNGAP1. Interacts with SYNPO2. Interacts with SHANK3. Interacts with GRIN2B. Interacts with CACNB2. Interacts with LRRC7. Interacts with GRM5. Interacts with DAGLA (via C-terminal); this interaction is enhanced by autophosphorylation of CAMK2A at Thr-286. Interacts with CAMK2N1; this interaction requires CAMK2A activation by Ca(2+). It depends on Mg(2+) as a cofactor. In terms of processing, autophosphorylation of Thr-286 following activation by Ca(2+)/calmodulin. Phosphorylation of Thr-286 locks the kinase into an activated state. Post-translationally, palmitoylated. Probably palmitoylated by ZDHHC3 and ZDHHC7. In terms of tissue distribution, expressed in brain. As to expression, expressed in skeletal muscle.

Its subcellular location is the cytoplasm. It is found in the synapse. The protein resides in the postsynaptic density. It localises to the cell projection. The protein localises to the dendritic spine. Its subcellular location is the dendrite. The enzyme catalyses L-seryl-[protein] + ATP = O-phospho-L-seryl-[protein] + ADP + H(+). It carries out the reaction L-threonyl-[protein] + ATP = O-phospho-L-threonyl-[protein] + ADP + H(+). With respect to regulation, activated by Ca(2+)/calmodulin. Binding of calmodulin results in conformational change that relieves intrasteric autoinhibition and allows autophosphorylation of Thr-286 which turns the kinase in a constitutively active form and confers to the kinase a Ca(2+)-independent activity. Functionally, calcium/calmodulin-dependent protein kinase that functions autonomously after Ca(2+)/calmodulin-binding and autophosphorylation, and is involved in various processes, such as synaptic plasticity, neurotransmitter release and long-term potentiation. Member of the NMDAR signaling complex in excitatory synapses, it regulates NMDAR-dependent potentiation of the AMPAR and therefore excitatory synaptic transmission. Regulates dendritic spine development. Also regulates the migration of developing neurons. Phosphorylates the transcription factor FOXO3 to activate its transcriptional activity. Phosphorylates the transcription factor ETS1 in response to calcium signaling, thereby decreasing ETS1 affinity for DNA. In response to interferon-gamma (IFN-gamma) stimulation, catalyzes phosphorylation of STAT1, stimulating the JAK-STAT signaling pathway. In response to interferon-beta (IFN-beta) stimulation, stimulates the JAK-STAT signaling pathway. Acts as a negative regulator of 2-arachidonoylglycerol (2-AG)-mediated synaptic signaling via modulation of DAGLA activity. Has no kinase activity. The chain is Calcium/calmodulin-dependent protein kinase type II subunit alpha (Camk2a) from Mus musculus (Mouse).